Reading from the N-terminus, the 813-residue chain is G-type lectin S-receptor-like serine/threonine-protein kinase LECRK1 (813 aa).

An N-terminal signal peptide occupies residues 1–19 (MVALLLFPMLLQLLSPTCA). Over 20 to 466 (QTQKNITLGS…NRKHWVLGSS (447 aa)) the chain is Extracellular. A Bulb-type lectin domain is found at 22–149 (QKNITLGSTL…DGTTKWQTFD (128 aa)). N-linked (GlcNAc...) asparagine glycosylation is found at Asn-24, Asn-57, Asn-164, Asn-168, Asn-219, and Asn-242. One can recognise an EGF-like; atypical domain in the interval 293 to 346 (PQNICHAIVSDVGSGVCGFNSYCTFDGTRNQIASCQCPPWYKFFDEQKKYKGCK). Cystine bridges form between Cys-297-Cys-315, Cys-309-Cys-327, Cys-329-Cys-345, Cys-391-Cys-413, and Cys-395-Cys-401. In terms of domain architecture, PAN spans 354–433 (CDLEEATALA…NMADYVQRTV (80 aa)). N-linked (GlcNAc...) asparagine glycosylation is found at Asn-407 and Asn-441. Residues 467–487 (LILGTSILVNFALISIFLFGT) form a helical membrane-spanning segment. Over 488–813 (YCRITTKKNI…DPCSFISSLP (326 aa)) the chain is Cytoplasmic. The Protein kinase domain maps to 523-797 (AGFHEILGAG…KVTQMLDGAV (275 aa)). ATP-binding positions include 529 to 537 (LGAGASGVV) and Lys-553. The active-site Proton acceptor is the Asp-647.

The protein belongs to the protein kinase superfamily. Ser/Thr protein kinase family. In terms of assembly, interacts (via kinase domain) with ADF4. In terms of tissue distribution, expressed in plumules, radicles and panicles.

The protein localises to the membrane. The enzyme catalyses L-seryl-[protein] + ATP = O-phospho-L-seryl-[protein] + ADP + H(+). It carries out the reaction L-threonyl-[protein] + ATP = O-phospho-L-threonyl-[protein] + ADP + H(+). Involved in innate immunity. Required for the expression of defense-related genes PR1A, LOX2 and CHS1 upon biotic stresses. Required for basal resistance to the fungal blast (M.grisea), bacterial blight (O.oryzae pv. oryzae, Xoo) and the herbivorous insect brown planthopper (N.lugens, BPH). May be involved in several defense signaling pathways. Involved in the promotion of seed germination. Required for the expression of alpha-amylase genes during seed germination. Involved in resistance against the brown planthopper (BPH). Member of the BPH3 (BPH resistance locus 3) cluster which contains LECRK1, LECRK2 and LECRK3. The protein is G-type lectin S-receptor-like serine/threonine-protein kinase LECRK1 of Oryza sativa subsp. indica (Rice).